We begin with the raw amino-acid sequence, 130 residues long: uncharacterized protein (130 aa).

The first 23 residues, 1 to 23 (MINRKVVYALSALLLFVYSYAFI), serve as a signal peptide directing secretion.

This is an uncharacterized protein from Aquifex aeolicus (strain VF5).